The following is a 432-amino-acid chain: ATP-dependent RNA helicase RhlB (432 aa).

The short motif at 9–37 (QNFADLGLQPQVIDGLNAKGFIKCTPIQA) is the Q motif element. The 180-residue stretch at 40-219 (LPVLLAGQDI…FEHMQEPEHV (180 aa)) folds into the Helicase ATP-binding domain. 53–60 (AQTGTGKT) contributes to the ATP binding site. Residues 165–168 (DEAD) carry the DEAD box motif. A Helicase C-terminal domain is found at 245 to 390 (ALLQTLIEEE…QSDYDASALL (146 aa)). Positions 397–432 (LRLQRRPQQNRRNNNGQRQGGNRKHSRPRQPRNTQS) are disordered. Basic residues predominate over residues 417 to 426 (GNRKHSRPRQ).

It belongs to the DEAD box helicase family. RhlB subfamily. Component of the RNA degradosome, which is a multiprotein complex involved in RNA processing and mRNA degradation.

Its subcellular location is the cytoplasm. It catalyses the reaction ATP + H2O = ADP + phosphate + H(+). DEAD-box RNA helicase involved in RNA degradation. Has RNA-dependent ATPase activity and unwinds double-stranded RNA. The sequence is that of ATP-dependent RNA helicase RhlB from Aliivibrio fischeri (strain MJ11) (Vibrio fischeri).